The sequence spans 583 residues: Probable lysosomal cobalamin transporter (583 aa).

The next 10 membrane-spanning stretches (helical) occupy residues 8 to 28 (LIWA…SVFI), 41 to 61 (VILT…LVPV), 95 to 115 (IVYY…IPFI), 145 to 165 (TVSF…VPVA), 188 to 208 (ALTF…VLYT), 312 to 332 (LLSG…MLLT), 347 to 367 (GYIL…VQSA), 375 to 395 (VIFT…ISAV), 418 to 438 (LLAT…TSMI), and 506 to 526 (FFGA…LLVM). A compositionally biased stretch (acidic residues) spans 541–552 (LDEDAEEAEEES). The tract at residues 541–562 (LDEDAEEAEEESLLANTRGRAE) is disordered.

It belongs to the LIMR family. LMBRD1 subfamily.

The protein resides in the lysosome membrane. Its function is as follows. Probable lysosomal cobalamin transporter. Required to export cobalamin from lysosomes allowing its conversion to cofactors. The sequence is that of Probable lysosomal cobalamin transporter from Aspergillus oryzae (strain ATCC 42149 / RIB 40) (Yellow koji mold).